A 195-amino-acid chain; its full sequence is Molybdenum cofactor guanylyltransferase (195 aa).

Residues 10 to 12, Lys23, Asn51, Asp69, and Asp99 each bind GTP; that span reads LAG. Asp99 serves as a coordination point for Mg(2+).

The protein belongs to the MobA family. As to quaternary structure, monomer. The cofactor is Mg(2+).

It is found in the cytoplasm. The catalysed reaction is Mo-molybdopterin + GTP + H(+) = Mo-molybdopterin guanine dinucleotide + diphosphate. Transfers a GMP moiety from GTP to Mo-molybdopterin (Mo-MPT) cofactor (Moco or molybdenum cofactor) to form Mo-molybdopterin guanine dinucleotide (Mo-MGD) cofactor. In Shewanella putrefaciens (strain CN-32 / ATCC BAA-453), this protein is Molybdenum cofactor guanylyltransferase.